The chain runs to 436 residues: Chromosomal replication initiator protein DnaA (436 aa).

The domain I, interacts with DnaA modulators stretch occupies residues 1–69 (MLADEVLELL…AHLFEVKTGT (69 aa)). The segment at 69-99 (TKPNVEITTQTKLKSSKQNQVNIKQIKAQST) is domain II. A domain III, AAA+ region region spans residues 100–314 (LLNPAYTFEN…SAIINLNAYA (215 aa)). Residues glycine 144, glycine 146, lysine 147, and threonine 148 each coordinate ATP. The domain IV, binds dsDNA stretch occupies residues 315 to 436 (NLMRQEITLD…ELKNKILTKG (122 aa)).

The protein belongs to the DnaA family. Oligomerizes as a right-handed, spiral filament on DNA at oriC.

The protein localises to the cytoplasm. Plays an essential role in the initiation and regulation of chromosomal replication. ATP-DnaA binds to the origin of replication (oriC) to initiate formation of the DNA replication initiation complex once per cell cycle. Binds the DnaA box (a 9 base pair repeat at the origin) and separates the double-stranded (ds)DNA. Forms a right-handed helical filament on oriC DNA; dsDNA binds to the exterior of the filament while single-stranded (ss)DNA is stabiized in the filament's interior. The ATP-DnaA-oriC complex binds and stabilizes one strand of the AT-rich DNA unwinding element (DUE), permitting loading of DNA polymerase. After initiation quickly degrades to an ADP-DnaA complex that is not apt for DNA replication. Binds acidic phospholipids. This is Chromosomal replication initiator protein DnaA from Campylobacter curvus (strain 525.92).